Here is a 193-residue protein sequence, read N- to C-terminus: NADPH:quinone oxidoreductase MdaB (193 aa).

FAD-binding positions include 16 to 23, 69 to 72, Tyr-108, and 124 to 127; these read SNGQLNDT, GWWM, and TWNA.

This sequence belongs to the oxidoreductase MdaB family. In terms of assembly, homodimer. It depends on FAD as a cofactor.

It localises to the cytoplasm. It carries out the reaction a quinone + NADPH + H(+) = a quinol + NADP(+). In terms of biological role, NADPH-specific quinone reductase. This chain is NADPH:quinone oxidoreductase MdaB, found in Escherichia coli O157:H7.